Reading from the N-terminus, the 107-residue chain is UPF0145 protein ESA_02470 (107 aa).

It belongs to the UPF0145 family.

This is UPF0145 protein ESA_02470 from Cronobacter sakazakii (strain ATCC BAA-894) (Enterobacter sakazakii).